The sequence spans 185 residues: Ribosome-recycling factor (185 aa).

This sequence belongs to the RRF family.

The protein resides in the cytoplasm. In terms of biological role, responsible for the release of ribosomes from messenger RNA at the termination of protein biosynthesis. May increase the efficiency of translation by recycling ribosomes from one round of translation to another. The sequence is that of Ribosome-recycling factor from Thermobifida fusca (strain YX).